Consider the following 416-residue polypeptide: MSTPLQGIKVLDFTGVQSGPSCTQMLAWFGADVIKIERPGVGDVTRHQLRDIPDIDALYFTMLNSNKRSIELNTKTAEGKEVMEKLIREADILVENFHPGAIDHMGFTWEHIQEINPRLIFGSIKGFDECSPYVNVKAYENVAQAAGGAASTTGFWDGPPLVSAAALGDSNTGMHLLIGLLAALLHREKTGRGQRVTMSMQDAVLNLCRVKLRDQQRLDKLGYLEEYPQYPNGTFGDAVPRGGNAGGGGQPGWILKCKGWETDPNAYIYFTIQEQNWENTCKAIGKPDWITDPAYSTAHARQPHIFDIFAEIEKYTVTIDKHEAVAYLTQFDIPCAPVLSMKEISLDPSLRQSGSVVEVEQPLRGKYLTVGCPMKFSAFTPDIKAAPLLGEHTAAVLQELGYSDDEIAAMKQNHAI.

CoA is bound by residues 17–18, arginine 38, 72–75, 96–98, histidine 104, and 137–140; these read QS, LNTK, NFH, and KAYE. Aspartate 169 functions as the Nucleophile in the catalytic mechanism. 248–250 serves as a coordination point for substrate; the sequence is GGQ. Residue 273–275 participates in CoA binding; that stretch reads QEQ.

The protein belongs to the CoA-transferase III family. Frc subfamily. In terms of assembly, homodimer.

It carries out the reaction formyl-CoA + oxalate = oxalyl-CoA + formate. The protein operates within metabolic intermediate degradation; oxalate degradation; CO(2) and formate from oxalate: step 1/2. Its function is as follows. Involved in the catabolism of oxalate and in the adapatation to low pH via the induction of the oxalate-dependent acid tolerance response (ATR). Catalyzes the transfer of the CoA moiety from formyl-CoA to oxalate. The chain is Formyl-CoA:oxalate CoA-transferase from Escherichia coli O17:K52:H18 (strain UMN026 / ExPEC).